We begin with the raw amino-acid sequence, 219 residues long: MSLVPEHGNVYVLNQTNQLKGLFTIIRDKTKPRSEFIFYANRIIRLIVEEGLNHLPVSSAKVTTAQNAEYEGVMFDGRICGVSIMRAGESMEQGLRECCRSVRIGKILIQRDEETHKPVLHYIKLPEDISKRYVLLLDPMLATGGSAICAMEILINMGCKQEQIIFLNVIASPEGLKNVHDRFPNIRIVTAVIDEGLDNNGYIVPGLGDFGDIYFGTKA.

GTP is bound by residues arginine 33, arginine 42, and aspartate 76–isoleucine 79. A 5-phospho-alpha-D-ribose 1-diphosphate-binding site is contributed by arginine 86. Arginine 103 lines the GTP pocket. Arginine 111 is a binding site for 5-phospho-alpha-D-ribose 1-diphosphate. Arginine 132 serves as a coordination point for GTP. Residues aspartate 138 and aspartate 138–serine 146 contribute to the 5-phospho-alpha-D-ribose 1-diphosphate site. Residue tyrosine 202 participates in D-ribose 5-phosphate binding. Uracil is bound by residues isoleucine 203 and glycine 208–phenylalanine 210. Aspartate 209 provides a ligand contact to 5-phospho-alpha-D-ribose 1-diphosphate.

It belongs to the UPRTase family. Mg(2+) serves as cofactor.

It catalyses the reaction UMP + diphosphate = 5-phospho-alpha-D-ribose 1-diphosphate + uracil. It participates in pyrimidine metabolism; UMP biosynthesis via salvage pathway; UMP from uracil: step 1/1. Allosterically activated by GTP. In terms of biological role, catalyzes the conversion of uracil and 5-phospho-alpha-D-ribose 1-diphosphate (PRPP) to UMP and diphosphate. This is Uracil phosphoribosyltransferase 1 from Schizosaccharomyces pombe (strain 972 / ATCC 24843) (Fission yeast).